The chain runs to 633 residues: Pesticidal crystal protein Cry2Aa (633 aa).

It belongs to the delta endotoxin family.

Promotes colloidosmotic lysis by binding to the midgut epithelial cells of both dipteran (Aedes aegypti) and lepidopteran (Manduca sexta) larvae. In Bacillus thuringiensis subsp. kurstaki, this protein is Pesticidal crystal protein Cry2Aa (cry2Aa).